The following is a 320-amino-acid chain: Putative olfactory receptor 2W5 pseudogene (320 aa).

Asn5 is a glycosylation site (N-linked (GlcNAc...) asparagine). The next 4 helical transmembrane spans lie at 30–50 (VILI…LLLV), 58–78 (PMYF…ASIA), 98–118 (VAQL…LVVM), and 140–160 (LCLQ…FIMC). Cys97 and Cys179 are disulfide-bonded. Positions 267 to 320 (LPRSGEVPDSLLHHRHSQHQPPHLHFEEQGCEGDHEETSGVGERGWGASTRGTL) are disordered. A compositionally biased stretch (basic and acidic residues) spans 290–304 (LHFEEQGCEGDHEET).

Belongs to the G-protein coupled receptor 1 family.

The protein localises to the cell membrane. Its function is as follows. Odorant receptor. The protein is Putative olfactory receptor 2W5 pseudogene of Homo sapiens (Human).